The primary structure comprises 325 residues: Ribonuclease Z (325 aa).

H63, H65, D67, H68, H147, D218, and H276 together coordinate Zn(2+). The active-site Proton acceptor is the D67.

It belongs to the RNase Z family. As to quaternary structure, homodimer. It depends on Zn(2+) as a cofactor.

The enzyme catalyses Endonucleolytic cleavage of RNA, removing extra 3' nucleotides from tRNA precursor, generating 3' termini of tRNAs. A 3'-hydroxy group is left at the tRNA terminus and a 5'-phosphoryl group is left at the trailer molecule.. In terms of biological role, zinc phosphodiesterase, which displays some tRNA 3'-processing endonuclease activity. Probably involved in tRNA maturation, by removing a 3'-trailer from precursor tRNA. The polypeptide is Ribonuclease Z (Oenococcus oeni (strain ATCC BAA-331 / PSU-1)).